The primary structure comprises 262 residues: Ornithine carbamoyltransferase (262 aa).

Residues 3-7 (STRTR), glutamine 30, arginine 54, and 81-84 (HPTQ) each bind carbamoyl phosphate. Residues asparagine 114, aspartate 178, and 182-183 (SM) contribute to the L-ornithine site. Carbamoyl phosphate contacts are provided by residues 219–222 (HCLP) and threonine 247.

The protein belongs to the aspartate/ornithine carbamoyltransferase superfamily. OTCase family.

It localises to the cytoplasm. The catalysed reaction is carbamoyl phosphate + L-ornithine = L-citrulline + phosphate + H(+). Its pathway is amino-acid biosynthesis; L-arginine biosynthesis; L-arginine from L-ornithine and carbamoyl phosphate: step 1/3. Functionally, reversibly catalyzes the transfer of the carbamoyl group from carbamoyl phosphate (CP) to the N(epsilon) atom of ornithine (ORN) to produce L-citrulline. This chain is Ornithine carbamoyltransferase (argF), found in Neisseria polysaccharea.